A 485-amino-acid polypeptide reads, in one-letter code: CUGBP Elav-like family member 5 (485 aa).

Residues 1 to 11 (MARLTESEARR) are compositionally biased toward basic and acidic residues. A disordered region spans residues 1-40 (MARLTESEARRQQQQLLQPRPSPVGSSGPEPPGGQPDGMK). Residues 12–28 (QQQQLLQPRPSPVGSSG) are compositionally biased toward low complexity. RRM domains are found at residues 45 to 126 (IKLF…PADS), 134 to 214 (RKLF…FADT), and 400 to 478 (CNLF…LKRP).

It belongs to the CELF/BRUNOL family. As to expression, expressed in brain.

Its subcellular location is the nucleus. The protein resides in the cytoplasm. In terms of biological role, RNA-binding protein implicated in the regulation of pre-mRNA alternative splicing. Mediates exon inclusion and/or exclusion in pre-mRNA that are subject to tissue-specific and developmentally regulated alternative splicing. Specifically activates exon 5 inclusion of cardiac isoforms of TNNT2 during heart remodeling at the juvenile to adult transition. Binds to muscle-specific splicing enhancer (MSE) intronic sites flanking the alternative exon 5 of TNNT2 pre-mRNA. The sequence is that of CUGBP Elav-like family member 5 (CELF5) from Homo sapiens (Human).